The chain runs to 379 residues: Putative glutamate--cysteine ligase 2 (379 aa).

This sequence belongs to the glutamate--cysteine ligase type 2 family. YbdK subfamily.

It carries out the reaction L-cysteine + L-glutamate + ATP = gamma-L-glutamyl-L-cysteine + ADP + phosphate + H(+). In terms of biological role, ATP-dependent carboxylate-amine ligase which exhibits weak glutamate--cysteine ligase activity. This chain is Putative glutamate--cysteine ligase 2, found in Roseiflexus sp. (strain RS-1).